The following is a 120-amino-acid chain: MIF-like protein mif-2 (120 aa).

This sequence belongs to the MIF family.

In Caenorhabditis elegans, this protein is MIF-like protein mif-2 (mif-2).